The sequence spans 389 residues: tRNA-specific 2-thiouridylase MnmA (389 aa).

ATP contacts are provided by residues 35-42 (GMSGGVDS) and M61. The interval 121–123 (NPD) is interaction with target base in tRNA. The active-site Nucleophile is the C126. A disulfide bond links C126 and C223. Position 151 (G151) interacts with ATP. Residues 173-175 (KDQ) form an interaction with tRNA region. Catalysis depends on C223, which acts as the Cysteine persulfide intermediate. The interval 335–336 (RY) is interaction with tRNA.

Belongs to the MnmA/TRMU family.

Its subcellular location is the cytoplasm. It catalyses the reaction S-sulfanyl-L-cysteinyl-[protein] + uridine(34) in tRNA + AH2 + ATP = 2-thiouridine(34) in tRNA + L-cysteinyl-[protein] + A + AMP + diphosphate + H(+). Functionally, catalyzes the 2-thiolation of uridine at the wobble position (U34) of tRNA, leading to the formation of s(2)U34. This Mannheimia succiniciproducens (strain KCTC 0769BP / MBEL55E) protein is tRNA-specific 2-thiouridylase MnmA.